Here is a 77-residue protein sequence, read N- to C-terminus: Large ribosomal subunit protein eL13 (77 aa).

Belongs to the eukaryotic ribosomal protein eL13 family.

This is Large ribosomal subunit protein eL13 from Sulfurisphaera tokodaii (strain DSM 16993 / JCM 10545 / NBRC 100140 / 7) (Sulfolobus tokodaii).